Reading from the N-terminus, the 649-residue chain is 1-deoxy-D-xylulose-5-phosphate synthase 1 (649 aa).

Thiamine diphosphate-binding positions include His73 and Ser113–Ala115. Asp144 contributes to the Mg(2+) binding site. Residues Gly145 to Ala146, Asn174, Tyr285, and Glu367 contribute to the thiamine diphosphate site. Asn174 contacts Mg(2+). The segment at Leu623–Ala649 is disordered.

Belongs to the transketolase family. DXPS subfamily. As to quaternary structure, homodimer. The cofactor is Mg(2+). It depends on thiamine diphosphate as a cofactor.

It catalyses the reaction D-glyceraldehyde 3-phosphate + pyruvate + H(+) = 1-deoxy-D-xylulose 5-phosphate + CO2. It functions in the pathway metabolic intermediate biosynthesis; 1-deoxy-D-xylulose 5-phosphate biosynthesis; 1-deoxy-D-xylulose 5-phosphate from D-glyceraldehyde 3-phosphate and pyruvate: step 1/1. Functionally, catalyzes the acyloin condensation reaction between C atoms 2 and 3 of pyruvate and glyceraldehyde 3-phosphate to yield 1-deoxy-D-xylulose-5-phosphate (DXP). The protein is 1-deoxy-D-xylulose-5-phosphate synthase 1 of Kitasatospora griseola (Streptomyces griseolosporeus).